The chain runs to 683 residues: DNA ligase 2 (683 aa).

NAD(+)-binding positions include 27-31 (DGEFD), 76-77 (SL), and E106. The active-site N6-AMP-lysine intermediate is K108. NAD(+) contacts are provided by R129, E169, K285, and K309. Residues C403, C406, C422, and C428 each coordinate Zn(2+). The 90-residue stretch at 592–681 (SIERTLEGLS…PAAVAAEEPE (90 aa)) folds into the BRCT domain.

This sequence belongs to the NAD-dependent DNA ligase family. LigA subfamily. The cofactor is Mg(2+). Mn(2+) serves as cofactor.

The catalysed reaction is NAD(+) + (deoxyribonucleotide)n-3'-hydroxyl + 5'-phospho-(deoxyribonucleotide)m = (deoxyribonucleotide)n+m + AMP + beta-nicotinamide D-nucleotide.. In terms of biological role, DNA ligase that catalyzes the formation of phosphodiester linkages between 5'-phosphoryl and 3'-hydroxyl groups in double-stranded DNA using NAD as a coenzyme and as the energy source for the reaction. It is essential for DNA replication and repair of damaged DNA. The protein is DNA ligase 2 of Nocardia farcinica (strain IFM 10152).